The following is a 662-amino-acid chain: Glutathione hydrolase 7 (662 aa).

Over 1 to 106 (MAAENEASQE…ASECSCRQDG (106 aa)) the chain is Cytoplasmic. Phosphoserine occurs at positions 17, 72, 79, and 83. Positions 26–90 (SFPRLPEDEP…DGSPLRETRK (65 aa)) are disordered. The span at 72 to 83 (SSSSEMGSQDGS) shows a compositional bias: low complexity. The chain crosses the membrane as a helical; Signal-anchor for type II membrane protein span at residues 107–127 (LTVIVTACLTFATGVTVALIM). At 128-662 (QIYFGDPQIF…SPDAAGATIL (535 aa)) the chain is on the extracellular side. N198, N267, N283, N330, N353, N394, N452, N519, and N586 each carry an N-linked (GlcNAc...) asparagine glycan.

It belongs to the gamma-glutamyltransferase family. In terms of assembly, heterodimer composed of the light and heavy chains. The active site is located in the light chain. In terms of processing, cleaved by autocatalysis into a large and a small subunit and the autocatalytic cleavage is essential to the functional activation of the enzyme.

Its subcellular location is the membrane. The catalysed reaction is an N-terminal (5-L-glutamyl)-[peptide] + an alpha-amino acid = 5-L-glutamyl amino acid + an N-terminal L-alpha-aminoacyl-[peptide]. The enzyme catalyses glutathione + H2O = L-cysteinylglycine + L-glutamate. It catalyses the reaction an S-substituted glutathione + H2O = an S-substituted L-cysteinylglycine + L-glutamate. The protein operates within sulfur metabolism; glutathione metabolism. Hydrolyzes and transfers gamma-glutamyl moieties from glutathione and other gamma-glutamyl compounds to acceptors. In Bos taurus (Bovine), this protein is Glutathione hydrolase 7.